The following is a 247-amino-acid chain: UDP-2,3-diacylglucosamine hydrolase (247 aa).

Mn(2+) is bound by residues aspartate 8, histidine 10, aspartate 41, asparagine 79, and histidine 114. 79–80 lines the substrate pocket; that stretch reads NR. Residues aspartate 122, serine 160, aspartate 171, arginine 174, and histidine 202 each coordinate substrate. Mn(2+)-binding residues include histidine 202 and histidine 204.

It belongs to the LpxH family. Mn(2+) is required as a cofactor.

It localises to the cell inner membrane. The catalysed reaction is UDP-2-N,3-O-bis[(3R)-3-hydroxytetradecanoyl]-alpha-D-glucosamine + H2O = 2-N,3-O-bis[(3R)-3-hydroxytetradecanoyl]-alpha-D-glucosaminyl 1-phosphate + UMP + 2 H(+). The protein operates within glycolipid biosynthesis; lipid IV(A) biosynthesis; lipid IV(A) from (3R)-3-hydroxytetradecanoyl-[acyl-carrier-protein] and UDP-N-acetyl-alpha-D-glucosamine: step 4/6. In terms of biological role, hydrolyzes the pyrophosphate bond of UDP-2,3-diacylglucosamine to yield 2,3-diacylglucosamine 1-phosphate (lipid X) and UMP by catalyzing the attack of water at the alpha-P atom. Involved in the biosynthesis of lipid A, a phosphorylated glycolipid that anchors the lipopolysaccharide to the outer membrane of the cell. The chain is UDP-2,3-diacylglucosamine hydrolase from Xanthomonas axonopodis pv. citri (strain 306).